Reading from the N-terminus, the 295-residue chain is Small ribosomal subunit protein uS2 (295 aa).

This sequence belongs to the universal ribosomal protein uS2 family. In terms of assembly, component of the small ribosomal subunit. Mature ribosomes consist of a small (40S) and a large (60S) subunit. The 40S subunit contains about 33 different proteins and 1 molecule of RNA (18S). The 60S subunit contains about 49 different proteins and 3 molecules of RNA (25S, 5.8S and 5S). Interacts with RPS21.

It is found in the cytoplasm. Required for the assembly and/or stability of the 40S ribosomal subunit. Required for the processing of the 20S rRNA-precursor to mature 18S rRNA in a late step of the maturation of 40S ribosomal subunits. This is Small ribosomal subunit protein uS2 from Paracoccidioides brasiliensis (strain Pb03).